The sequence spans 1141 residues: Translocase of chloroplast 125, chloroplastic (1141 aa).

Disordered regions lie at residues 1–177 (MDAL…ISGY) and 325–431 (GFVE…EANE). 2 stretches are compositionally biased toward basic and acidic residues: residues 57-72 (RVPE…KRDG) and 107-121 (IDGR…REDL). Over residues 132–150 (YDDDDDDEEEEEDGSEEGE) the composition is skewed to acidic residues. Residues 151–167 (STSSSIINSEYSSSASN) are compositionally biased toward low complexity. Acidic residues predominate over residues 328–353 (EAEEAESDVFTEGEDGYDDEDEDGDI). Composition is skewed to low complexity over residues 389-401 (RSSA…TTAT) and 408-429 (TASS…SSEA). An AIG1-type G domain is found at 505 to 734 (DFACTILVLG…KLQEASTPGK (230 aa)). Residues 514 to 521 (GKTGVGKS) are G1. A GTP-binding site is contributed by 517 to 522 (GVGKSA). Serine 521 is a Mg(2+) binding site. The interval 541-545 (STTKV) is G2. The tract at residues 561-564 (DTPG) is G3. Positions 633–636 (THAS) are G4. GTP is bound by residues histidine 634 and 682-683 (EN). The G5 stretch occupies residues 682–684 (ENH). Disordered regions lie at residues 758–795 (QLKM…PFRP) and 832–871 (IRRR…AVPM). The segment covering 770-789 (EDSDDDSDEEDEEEGDEYDD) has biased composition (acidic residues). Basic residues predominate over residues 832-841 (IRRRRERKKQ). The chain crosses the membrane as a helical span at residues 1116–1136 (MVLIGIVPILRSLINCRFGFG).

Belongs to the TRAFAC class TrmE-Era-EngA-EngB-Septin-like GTPase superfamily. AIG1/Toc34/Toc159-like paraseptin GTPase family. TOC159 subfamily. In terms of assembly, part of the TOC core complex. It depends on Mg(2+) as a cofactor.

It localises to the plastid. The protein localises to the chloroplast outer membrane. GTPase involved in protein precursor import into chloroplasts. Seems to recognize chloroplast-destined precursor proteins and regulate their presentation to the translocation channel through GTP hydrolysis. Probably specialized in the import of nuclear encoded non-photosynthetic preproteins from the cytoplasm to the chloroplast. The chain is Translocase of chloroplast 125, chloroplastic from Physcomitrium patens (Spreading-leaved earth moss).